The sequence spans 142 residues: Acidic phospholipase A2 Bc-PL (142 aa).

The signal sequence occupies residues 1–9; it reads AVCVSLLGA. The propeptide occupies 10–17; it reads ANIPPQPL. Disulfide bonds link Cys-28-Cys-94, Cys-44-Cys-141, Cys-46-Cys-62, Cys-61-Cys-122, Cys-68-Cys-115, Cys-78-Cys-108, and Cys-101-Cys-113. Positions 45, 47, and 49 each coordinate Ca(2+). His-65 is a catalytic residue. Asp-66 serves as a coordination point for Ca(2+). The active site involves Asp-116.

It belongs to the phospholipase A2 family. Group I subfamily. D49 sub-subfamily. The cofactor is Ca(2+). As to expression, expressed by the venom gland.

The protein resides in the secreted. The enzyme catalyses a 1,2-diacyl-sn-glycero-3-phosphocholine + H2O = a 1-acyl-sn-glycero-3-phosphocholine + a fatty acid + H(+). Functionally, PLA2 catalyzes the calcium-dependent hydrolysis of the 2-acyl groups in 3-sn-phosphoglycerides. The chain is Acidic phospholipase A2 Bc-PL from Bungarus candidus (Malayan krait).